Reading from the N-terminus, the 1645-residue chain is Histone-lysine N-methyltransferase set-26 (1645 aa).

Disordered regions lie at residues 1 to 82 (MADG…QQIP), 109 to 132 (EPAAAADSRPLTEEEQLAAERPTE), 200 to 228 (DAVGPGSPGTQYRRNQQTGGGLPSTSVAP), 417 to 606 (TPEQ…VLRP), and 651 to 789 (TGQS…DEAA). Composition is skewed to low complexity over residues 16–31 (EQPPLQQQQPEIAEPI) and 67–82 (QEFYQEPQIPEPQQIP). Positions 207 to 228 (PGTQYRRNQQTGGGLPSTSVAP) are enriched in polar residues. Composition is skewed to low complexity over residues 429-443 (RQRAAPQFPAAAAQR) and 453-467 (RPGASSSRAPRPSMA). Residues 559–578 (MTQEEKNAHFARLTTDKEKP) are compositionally biased toward basic and acidic residues. Pro residues predominate over residues 592 to 603 (PHVPPPPPPPLV). Residues 651–675 (TGQSGSSAAARQRTVSGSAARAQTY) are compositionally biased toward polar residues. Basic residues-rich tracts occupy residues 684–699 (QHHHQMPMDQRKRHSS) and 731–741 (HRPRGRPKGTR). Acidic residues predominate over residues 780–789 (SESEGIDEAA). A PHD-type zinc finger spans residues 794-842 (TMRCHCGMDHGDGDTIECEGCKTWQHMACMGLTLKSNTSKYKCEMCLPR). Residues 865 to 904 (AAKKQKRKSEPVEQKQKSQPSTSRKSAPMALQQQPAEPRV) are disordered. Positions 881–899 (KSQPSTSRKSAPMALQQQP) are enriched in polar residues. The SET domain occupies 973–1064 (MSNEVKRQPG…RNTEVTLPFD (92 aa)). Over residues 1099 to 1172 (RHRAMDHKKR…EAKERKKMEV (74 aa)) the composition is skewed to basic and acidic residues. Disordered stretches follow at residues 1099 to 1333 (RHRA…SKNV), 1371 to 1536 (SGLL…STEG), and 1548 to 1645 (PLDD…TRWN). A coiled-coil region spans residues 1103 to 1217 (MDHKKREAEE…GKRKEARRRS (115 aa)). Low complexity predominate over residues 1173-1183 (EASAAAAPESS). Positions 1188–1210 (AREERRIQQAEEMFRRQEEEGKR) are enriched in basic and acidic residues. 2 stretches are compositionally biased toward polar residues: residues 1258-1268 (TTQPSTSSFAT) and 1300-1311 (TVATPKDTTASN). Composition is skewed to basic and acidic residues over residues 1382–1427 (SEVR…KKAN), 1434–1450 (KSEKAVEKAVEKVEKKP), and 1468–1485 (KKTEEVDGIEREASESSS). Positions 1554–1565 (SSSNTAPTTTIA) are enriched in polar residues.

Belongs to the class V-like SAM-binding methyltransferase superfamily. Expressed both in the germline and in somatic tissues.

It is found in the nucleus. It catalyses the reaction L-lysyl(9)-[histone H3] + 3 S-adenosyl-L-methionine = N(6),N(6),N(6)-trimethyl-L-lysyl(9)-[histone H3] + 3 S-adenosyl-L-homocysteine + 3 H(+). Functionally, histone methyltransferase that mediates trimethylation of 'Lys-9' of histone H3 in vitro. Involved in transcriptional regulation. Plays a role in the negative regulation of lifespan and in heat resistance. Together with set-9, negatively regulates lifespan in a germline-independent, partially daf-16-dependent fashion. Together with set-9, plays a role in germline development and maintenance and might play a role in the restriction of the trimethylation mark on histone H3 'Lys-4'(H3K4me3) to target genes specifically in the germline. Together with spr-5, required for transgenerational fertility. In Caenorhabditis elegans, this protein is Histone-lysine N-methyltransferase set-26.